The chain runs to 256 residues: Homeobox protein TGIF2LX (256 aa).

Residues 1–45 form a disordered region; that stretch reads MEAAADSPAETRSRVEKDSRRVEKDSRRPKKDSPAKTQSPAQDTS. Over residues 9–34 the composition is skewed to basic and acidic residues; that stretch reads AETRSRVEKDSRRVEKDSRRPKKDSP. The span at 35-45 shows a compositional bias: polar residues; it reads AKTQSPAQDTS. Residues 62 to 125 constitute a DNA-binding region (homeobox; TALE-type); it reads EHKKKRKGYL…INARRRILPD (64 aa). The interval 136 to 224 is disordered; that stretch reads VGHKTGKDAN…SSSPEPVSTE (89 aa). Over residues 166–179 the composition is skewed to polar residues; sequence DNVQSLPLRSSPKG. The span at 209 to 224 shows a compositional bias: low complexity; that stretch reads VSNITSSSSPEPVSTE.

Belongs to the TALE/TGIF homeobox family.

The protein resides in the nucleus. In terms of biological role, may have a transcription role in testis. This is Homeobox protein TGIF2LX (TGIF2LX) from Papio hamadryas (Hamadryas baboon).